A 220-amino-acid chain; its full sequence is Iron-sulfur cluster repair protein YtfE (220 aa).

Belongs to the RIC family. YtfE subfamily. As to quaternary structure, homodimer.

Its subcellular location is the cytoplasm. Functionally, di-iron-containing protein involved in the repair of iron-sulfur clusters damaged by oxidative and nitrosative stress conditions. This chain is Iron-sulfur cluster repair protein YtfE, found in Shigella boydii serotype 18 (strain CDC 3083-94 / BS512).